The chain runs to 489 residues: Homoserine O-acetyltransferase (489 aa).

One can recognise an AB hydrolase-1 domain in the interval 63-435 (NALVICHALS…SPEGHDAFLL (373 aa)). The active site involves Ser-162. The active-site Nucleophile is Ser-162. A disordered region spans residues 247-272 (RFGRNVPDPSKRQNINGTERLPTPPN). Residues Asp-401 and His-430 contribute to the active site.

This sequence belongs to the AB hydrolase superfamily. MetX family.

The catalysed reaction is L-homoserine + acetyl-CoA = O-acetyl-L-homoserine + CoA. It functions in the pathway amino-acid biosynthesis; L-methionine biosynthesis via de novo pathway; O-acetyl-L-homoserine from L-homoserine: step 1/1. In terms of biological role, commits homoserine to the methionine biosynthesis pathway by catalyzing its O-acetylation. The chain is Homoserine O-acetyltransferase (metE) from Emericella nidulans (strain FGSC A4 / ATCC 38163 / CBS 112.46 / NRRL 194 / M139) (Aspergillus nidulans).